A 104-amino-acid polypeptide reads, in one-letter code: Large ribosomal subunit protein bL27 (104 aa).

A propeptide spanning residues 1–15 (MNNKYFLTKIDLQFF) is cleaved from the precursor.

This sequence belongs to the bacterial ribosomal protein bL27 family. The N-terminus is cleaved by ribosomal processing cysteine protease Prp.

This is Large ribosomal subunit protein bL27 from Mycoplasma pneumoniae (strain ATCC 29342 / M129 / Subtype 1) (Mycoplasmoides pneumoniae).